The chain runs to 204 residues: MSKRQEAKYKIDRRLGVNLWGRAKSPVNKREYGPGQHGQRRKKPSDYGMQLMAKQKLKGYYGNIGEKQFRRLYQEAVRRKGDSGENLIQLLERRLDAVVYRMKFAATPFASRQLINHGHILVNGRRVNIPSYTVKDGDSIEVRSKAKQFAFVMEAAASGERDIPDYLSVDSQALKGTYVRAPGLADVPYPVQMEPNLVIEFYSR.

Residues 25–47 (SPVNKREYGPGQHGQRRKKPSDY) form a disordered region. In terms of domain architecture, S4 RNA-binding spans 93-156 (RRLDAVVYRM…KQFAFVMEAA (64 aa)).

It belongs to the universal ribosomal protein uS4 family. As to quaternary structure, part of the 30S ribosomal subunit. Contacts protein S5. The interaction surface between S4 and S5 is involved in control of translational fidelity.

One of the primary rRNA binding proteins, it binds directly to 16S rRNA where it nucleates assembly of the body of the 30S subunit. In terms of biological role, with S5 and S12 plays an important role in translational accuracy. The chain is Small ribosomal subunit protein uS4 from Rhodospirillum centenum (strain ATCC 51521 / SW).